Reading from the N-terminus, the 226-residue chain is Agamous-like MADS-box protein AGL23 (226 aa).

Residues 6-66 (LGRRKVEIVK…GKVFSFGHPN (61 aa)) form the MADS-box domain. A coiled-coil region spans residues 95-132 (VQMLNKSYTEVKAEVEKEQKNKQSRAQNERENENAEEW). Basic and acidic residues predominate over residues 108–127 (EVEKEQKNKQSRAQNERENE). Residues 108–131 (EVEKEQKNKQSRAQNERENENAEE) form a disordered region.

The protein localises to the nucleus. Its function is as follows. Probable transcription factor that controls female gametophyte (megagametogenesis) development and chloroplast biogenesis during embryo development. This Arabidopsis thaliana (Mouse-ear cress) protein is Agamous-like MADS-box protein AGL23.